The primary structure comprises 232 residues: LexA repressor (232 aa).

The span at 1–10 shows a compositional bias: polar residues; that stretch reads MDDSNDSSSA. The interval 1 to 22 is disordered; that stretch reads MDDSNDSSSAGPDGRLHAVDPS. The segment at residues 47–67 is a DNA-binding region (H-T-H motif); the sequence is IREIGDAVGLTSTSSVAHQLR. Catalysis depends on for autocatalytic cleavage activity residues Ser156 and Lys193.

This sequence belongs to the peptidase S24 family. Homodimer.

It carries out the reaction Hydrolysis of Ala-|-Gly bond in repressor LexA.. Its function is as follows. Represses a number of genes involved in the response to DNA damage (SOS response), including recA and lexA. In the presence of single-stranded DNA, RecA interacts with LexA causing an autocatalytic cleavage which disrupts the DNA-binding part of LexA, leading to derepression of the SOS regulon and eventually DNA repair. The chain is LexA repressor from Mycolicibacterium paratuberculosis (strain ATCC BAA-968 / K-10) (Mycobacterium paratuberculosis).